A 584-amino-acid polypeptide reads, in one-letter code: DNA damage-binding protein 2 (584 aa).

The disordered stretch occupies residues 1–87 (MGPTTRARFV…PVAAAARSGR (87 aa)). Positions 8–20 (RFVHNRRRRRRRG) are enriched in basic residues. Composition is skewed to acidic residues over residues 25–35 (PDDDDEEEDQQ) and 45–66 (DEGE…DGEA). A CCHC-type zinc finger spans residues 122–140 (KPCFLCKMPGGHTTLTCPH). 7 WD repeats span residues 192-232 (FHQR…EKIT), 236-278 (VHSC…SLLN), 288-327 (STWR…RIGD), 333-373 (KKGS…PNSA), 378-418 (AHGR…LESP), 438-481 (EWDP…LAEV), and 484-523 (PDIT…DATE). The DWD box motif lies at 351–366 (LLSSGNDHYARIWDTR). A compositionally biased stretch (basic and acidic residues) spans 517–532 (TESDATEERNREKAKE). Positions 517–584 (TESDATEERN…TIKGKGKSKV (68 aa)) are disordered. Residues 562–584 (KKKKKAKKTRFTHTIKGKGKSKV) are compositionally biased toward basic residues.

This sequence belongs to the WD repeat DDB2/WDR76 family. As to quaternary structure, component of the UV-DDB complex, which is composed of DDB1 and DDB2. In terms of tissue distribution, expressed in proliferating tissues such as shoot apical meristem (SAM), root tips and young leaves. Not detected in mature leaves.

The protein localises to the nucleus. Its function is as follows. Required for DNA repair. Binds to DDB1 to form the UV-damaged DNA-binding protein complex (the UV-DDB complex). The UV-DDB complex may recognize UV-induced DNA damage and recruit proteins of the nucleotide excision repair pathway (the NER pathway) to initiate DNA repair. May function as the substrate recognition module for a DCX (DDB1-CUL4-X-box) E3 ubiquitin-protein ligase complex. The sequence is that of DNA damage-binding protein 2 from Oryza sativa subsp. japonica (Rice).